The chain runs to 153 residues: Ribosomal RNA large subunit methyltransferase H (153 aa).

S-adenosyl-L-methionine contacts are provided by residues L70, G102, and 121–126 (LSSMTF).

This sequence belongs to the RNA methyltransferase RlmH family. In terms of assembly, homodimer.

The protein localises to the cytoplasm. The catalysed reaction is pseudouridine(1915) in 23S rRNA + S-adenosyl-L-methionine = N(3)-methylpseudouridine(1915) in 23S rRNA + S-adenosyl-L-homocysteine + H(+). Functionally, specifically methylates the pseudouridine at position 1915 (m3Psi1915) in 23S rRNA. The sequence is that of Ribosomal RNA large subunit methyltransferase H from Dictyoglomus thermophilum (strain ATCC 35947 / DSM 3960 / H-6-12).